The chain runs to 444 residues: Enolase (444 aa).

Residues H163 and E172 each coordinate substrate. E215 functions as the Proton donor in the catalytic mechanism. Residues D250, E300, and D327 each contribute to the Mg(2+) site. Residues E300 and D327 each contribute to the substrate site. K352 (proton acceptor) is an active-site residue. Residues 379 to 382 and K403 each bind substrate; that span reads SHRS.

It belongs to the enolase family. Homodimer. Mg(2+) is required as a cofactor.

The protein resides in the cytoplasm. The enzyme catalyses (2R)-2-phosphoglycerate = phosphoenolpyruvate + H2O. It functions in the pathway carbohydrate degradation; glycolysis; pyruvate from D-glyceraldehyde 3-phosphate: step 4/5. The polypeptide is Enolase (PGH1) (Mesembryanthemum crystallinum (Common ice plant)).